Consider the following 136-residue polypeptide: ATP synthase epsilon chain, plastid (136 aa).

This sequence belongs to the ATPase epsilon chain family. In terms of assembly, F-type ATPases have 2 components, CF(1) - the catalytic core - and CF(0) - the membrane proton channel. CF(1) has five subunits: alpha(3), beta(3), gamma(1), delta(1), epsilon(1). CF(0) has three main subunits: a, b and c.

The protein resides in the plastid thylakoid membrane. In terms of biological role, produces ATP from ADP in the presence of a proton gradient across the membrane. In Cuscuta reflexa (Southern Asian dodder), this protein is ATP synthase epsilon chain, plastid.